A 199-amino-acid polypeptide reads, in one-letter code: Molybdenum cofactor guanylyltransferase (199 aa).

GTP contacts are provided by residues 12–14, Lys25, Asn53, Asp71, and Asp101; that span reads LAG. Asp101 provides a ligand contact to Mg(2+).

The protein belongs to the MobA family. In terms of assembly, monomer. It depends on Mg(2+) as a cofactor.

Its subcellular location is the cytoplasm. It catalyses the reaction Mo-molybdopterin + GTP + H(+) = Mo-molybdopterin guanine dinucleotide + diphosphate. In terms of biological role, transfers a GMP moiety from GTP to Mo-molybdopterin (Mo-MPT) cofactor (Moco or molybdenum cofactor) to form Mo-molybdopterin guanine dinucleotide (Mo-MGD) cofactor. The sequence is that of Molybdenum cofactor guanylyltransferase from Polynucleobacter asymbioticus (strain DSM 18221 / CIP 109841 / QLW-P1DMWA-1) (Polynucleobacter necessarius subsp. asymbioticus).